A 148-amino-acid polypeptide reads, in one-letter code: Large ribosomal subunit protein bL9 (148 aa).

This sequence belongs to the bacterial ribosomal protein bL9 family.

Binds to the 23S rRNA. The chain is Large ribosomal subunit protein bL9 from Dechloromonas aromatica (strain RCB).